We begin with the raw amino-acid sequence, 107 residues long: Phosphoribosyl-ATP pyrophosphatase (107 aa).

The protein belongs to the PRA-PH family.

The protein resides in the cytoplasm. The catalysed reaction is 1-(5-phospho-beta-D-ribosyl)-ATP + H2O = 1-(5-phospho-beta-D-ribosyl)-5'-AMP + diphosphate + H(+). It functions in the pathway amino-acid biosynthesis; L-histidine biosynthesis; L-histidine from 5-phospho-alpha-D-ribose 1-diphosphate: step 2/9. The chain is Phosphoribosyl-ATP pyrophosphatase from Bacillus mycoides (strain KBAB4) (Bacillus weihenstephanensis).